A 121-amino-acid chain; its full sequence is Large ribosomal subunit protein bL12 (121 aa).

It belongs to the bacterial ribosomal protein bL12 family. Homodimer. Part of the ribosomal stalk of the 50S ribosomal subunit. Forms a multimeric L10(L12)X complex, where L10 forms an elongated spine to which 2 to 4 L12 dimers bind in a sequential fashion. Binds GTP-bound translation factors.

In terms of biological role, forms part of the ribosomal stalk which helps the ribosome interact with GTP-bound translation factors. Is thus essential for accurate translation. The protein is Large ribosomal subunit protein bL12 of Limosilactobacillus reuteri (strain DSM 20016) (Lactobacillus reuteri).